The following is a 172-amino-acid chain: 3-hydroxydecanoyl-[acyl-carrier-protein] dehydratase (172 aa).

The active site involves histidine 71.

This sequence belongs to the thioester dehydratase family. FabA subfamily. In terms of assembly, homodimer.

Its subcellular location is the cytoplasm. It catalyses the reaction a (3R)-hydroxyacyl-[ACP] = a (2E)-enoyl-[ACP] + H2O. It carries out the reaction (3R)-hydroxydecanoyl-[ACP] = (2E)-decenoyl-[ACP] + H2O. The catalysed reaction is (2E)-decenoyl-[ACP] = (3Z)-decenoyl-[ACP]. It participates in lipid metabolism; fatty acid biosynthesis. Functionally, necessary for the introduction of cis unsaturation into fatty acids. Catalyzes the dehydration of (3R)-3-hydroxydecanoyl-ACP to E-(2)-decenoyl-ACP and then its isomerization to Z-(3)-decenoyl-ACP. Can catalyze the dehydratase reaction for beta-hydroxyacyl-ACPs with saturated chain lengths up to 16:0, being most active on intermediate chain length. The sequence is that of 3-hydroxydecanoyl-[acyl-carrier-protein] dehydratase from Vibrio vulnificus (strain CMCP6).